Reading from the N-terminus, the 296-residue chain is SHSP domain-containing protein CPUR_05420 (296 aa).

Residues 50 to 83 (AWQTCPQQRHPHQPDVSGPPGSGFGEQPSQDTPN) form a disordered region. Positions 169–296 (ETKKSFTPDI…GKGVKEITIV (128 aa)) constitute a sHSP domain.

Belongs to the small heat shock protein (HSP20) family.

Its function is as follows. Monooxygenase; part of the ergochrome gene cluster responsible for the typical purple-black color of the ergot sclerotia. The ergochrome gene cluster produces several ergot pigments including the yellow ergochrome secalonic acid and its derivatives, as well as the red anthraquinones endocrocin and clavorubin. The pathway begins with the synthesis of atrochrysone thioester by the polyketide synthase (PKS) CPUR_05437. The atrochrysone carboxyl ACP thioesterase CPUR_05436 then breaks the thioester bond and releases the atrochrysone carboxylic acid from CPUR_05437. The atrochrysone carboxylic acid is then converted to atrochrysone which is further transformed into emodin anthrone. The next step is performed by the anthrone oxygenase CPUR_05434 that catalyzes the oxidation of emodinanthrone to emodin. Emodin is further modified to yield monodictyphenone via several steps involving CPUR_05427, CPUR_05428, CPUR_05429 and CPUR_05430. The short chain dehydrogenase/reductase CPUR_05418 then catalyzes the C-5 ketoreduction to give the xanthone skeleton of the monomeric units. Ergochromes formation requires further dimerization steps of different xanthone units, probably catalyzed by the cytochrome P450 monooxygenase CPUR_05419. CPUR_05425, CPUR_05426 and CPUR_05431 are unique to Claviceps, thus it is likely that they are involved in further modification of xanthone units or in their dimerization. The yellow ergochromes and the red anthraquinone pigments endocrocin and clavorubin are products from the same PKS derived precursors and the latter are likely shunt products in the pathway of xanthone biosynthesis. It is proposed that atrochrysone carboxylic acid released from the PKS CPUR_05437 can also be converted to endocrocin anthrone which is further oxidized into endocrocin by CPUR_05435. Endocrocin could be then modified to clavorubin, possibly by CPUR_05423 and CPUR_05431. Clavorubin is the principal anthraquinone metabolite produced by the cluster with a much higher yield compared to endocrocin. The sequence is that of SHSP domain-containing protein CPUR_05420 from Claviceps purpurea (strain 20.1) (Ergot fungus).